We begin with the raw amino-acid sequence, 548 residues long: Chaperonin GroEL (548 aa).

Residues Thr-29 to Pro-32, Lys-50, Asp-86 to Thr-90, Gly-414, Asn-478 to Ala-480, and Asp-494 each bind ATP.

It belongs to the chaperonin (HSP60) family. As to quaternary structure, forms a cylinder of 14 subunits composed of two heptameric rings stacked back-to-back. Interacts with the co-chaperonin GroES.

It localises to the cytoplasm. The catalysed reaction is ATP + H2O + a folded polypeptide = ADP + phosphate + an unfolded polypeptide.. Functionally, together with its co-chaperonin GroES, plays an essential role in assisting protein folding. The GroEL-GroES system forms a nano-cage that allows encapsulation of the non-native substrate proteins and provides a physical environment optimized to promote and accelerate protein folding. This chain is Chaperonin GroEL, found in Alcanivorax borkumensis (strain ATCC 700651 / DSM 11573 / NCIMB 13689 / SK2).